Here is a 127-residue protein sequence, read N- to C-terminus: Large ribosomal subunit protein bL20 (127 aa).

It belongs to the bacterial ribosomal protein bL20 family.

Its function is as follows. Binds directly to 23S ribosomal RNA and is necessary for the in vitro assembly process of the 50S ribosomal subunit. It is not involved in the protein synthesizing functions of that subunit. The polypeptide is Large ribosomal subunit protein bL20 (Akkermansia muciniphila (strain ATCC BAA-835 / DSM 22959 / JCM 33894 / BCRC 81048 / CCUG 64013 / CIP 107961 / Muc)).